Reading from the N-terminus, the 238-residue chain is tRNA (guanine-N(7)-)-methyltransferase (238 aa).

Glu-68, Glu-93, Asp-120, and Asp-143 together coordinate S-adenosyl-L-methionine. Asp-143 is a catalytic residue. Residues Lys-147, Asp-179, and 216–219 contribute to the substrate site; that span reads TKFE.

It belongs to the class I-like SAM-binding methyltransferase superfamily. TrmB family.

The catalysed reaction is guanosine(46) in tRNA + S-adenosyl-L-methionine = N(7)-methylguanosine(46) in tRNA + S-adenosyl-L-homocysteine. It participates in tRNA modification; N(7)-methylguanine-tRNA biosynthesis. Catalyzes the formation of N(7)-methylguanine at position 46 (m7G46) in tRNA. The protein is tRNA (guanine-N(7)-)-methyltransferase of Shewanella oneidensis (strain ATCC 700550 / JCM 31522 / CIP 106686 / LMG 19005 / NCIMB 14063 / MR-1).